The following is a 201-amino-acid chain: Lipopolysaccharide core heptose(II)-phosphate phosphatase (201 aa).

Residues 1 to 35 (MLAFTLRFIKNKRYFAILAGALVIIAGLTSQHAWS) form the signal peptide.

It belongs to the phosphoglycerate mutase family. Ais subfamily.

The protein localises to the periplasm. The protein operates within bacterial outer membrane biogenesis; lipopolysaccharide metabolism. Functionally, catalyzes the dephosphorylation of heptose(II) of the outer membrane lipopolysaccharide core. The protein is Lipopolysaccharide core heptose(II)-phosphate phosphatase of Salmonella enteritidis PT4 (strain P125109).